A 353-amino-acid chain; its full sequence is MNTRRELPESPYLAAASGRSPHRVPVWFMRQAGRSLPEYRELRAQHRMLQACFDAELVCEITMQPVRRHKVDAAILFSDIVVPLKAAGIGLDIVPDVGPVIDNPIRTLGDVQAMPALESPQVAPVAEAVRLLTAELGDVPLIGFAGAPFTLASYLVEGGPSRHHERTKAMMLGESSTWHALMTALTDLTIAFLQAQVDAGVDALQVFDSWAGTLSLTDYREYVLPHSSRVFATMAAAGVPMTHFGVGTAELLGAMSEALAPGAARVVGVDWRTSLADAAARVLPGAALQGNLDPVVLLAGWPVVEKAVRRVVEDGRAAVAAGAAGHIFNLGHGVLPATDPGIITDAVELVHSL.

Substrate-binding positions include 30–34 (RQAGR), Asp-79, Tyr-154, Ser-209, and His-332.

It belongs to the uroporphyrinogen decarboxylase family. As to quaternary structure, homodimer.

It localises to the cytoplasm. It catalyses the reaction uroporphyrinogen III + 4 H(+) = coproporphyrinogen III + 4 CO2. It participates in porphyrin-containing compound metabolism; protoporphyrin-IX biosynthesis; coproporphyrinogen-III from 5-aminolevulinate: step 4/4. Catalyzes the decarboxylation of four acetate groups of uroporphyrinogen-III to yield coproporphyrinogen-III. In Mycolicibacterium smegmatis (strain ATCC 700084 / mc(2)155) (Mycobacterium smegmatis), this protein is Uroporphyrinogen decarboxylase.